Here is a 981-residue protein sequence, read N- to C-terminus: MAADSEPESEVFEITDFTTASEWERFISKVEEVLNDWKLIGNSLGKPLEKGIFTSGTWEEKSDEISFADFKFSVTHHYLVQESTDKEGKDELLEDVVPQSMQDLLGMNNDFPPRAHCLVRWYGLREFVVIAPAAHSDAVLSESKCNLLLSSVSIALGNTGCQVPLFVQIHHKWRRMYVGECQGPGVRTDFEMVHLRKVPNQYTHLSGLLDIFKSKIGCPLTPLPPVSIAIRFTYVLQDWQQYFWPQQPPDIDALVGGEVGGLEFGKLPFGACEDPISELHLATTWPHLTEGIIVDNDVYSDLDPIQAPHWSVRVRKAENPQCLLGDFVTEFFKICRRKESTDEILGRSAFEEEGKETADITHALSKLTEPASVPIHKLSVSNMVHTAKKKIRKHRGVEESPLNNDVLNTILLFLFPDAVSEKPLDGTTSTDNNNPPSESEDYNLYNQFKSAPSDSLTYKLALCLCMINFYHGGLKGVAHLWQEFVLEMRFRWENNFLIPGLASGPPDLRCCLLHQKLQMLNCCIERKKARDEGKKTSASDVTNIYPGDAGKAGDQLVPDNLKETDKEKGEVGKSWDSWSDSEEEFFECLSDTEELKGNGQESGKKGGPKEMANLRPEGRLYQHGKLTLLHNGEPLYIPVTQEPAPMTEDLLEEQSEVLAKLGTSAEGAHLRARMQSACLLSDMESFKAANPGCSLEDFVRWYSPRDYIEEEVIDEKGNVVLKGELSARMKIPSNMWVEAWETAKPIPARRQRRLFDDTREAEKVLHYLAIQKPADLARHLLPCVIHAAVLKVKEEESLENISSVKKIIKQIISHSSKVLHFPNPEDKKLEEIIHQITNVEALIARARSLKAKFGTEKCEQEEEKEDLERFVSCLLEQPEVLVTGAGRGHAGRIIHKLFVNAQRAAAMTPPEEELKRMGSPEERRQNSVSDFPPPAGREFILRTTVPRPAPYSKALPQRMYSVLTKEDFRLAGAFSSDTSFF.

Ser-83, Ser-379, Ser-537, Ser-579, Ser-581, and Ser-590 each carry phosphoserine. Residues 592-613 (TEELKGNGQESGKKGGPKEMAN) form a disordered region. Ser-664 bears the Phosphoserine mark. Thr-908 carries the phosphothreonine modification. Positions 908–937 (TPPEEELKRMGSPEERRQNSVSDFPPPAGR) are disordered. Residues 912–925 (EELKRMGSPEERRQ) show a composition bias toward basic and acidic residues.

It belongs to the Rab3-GAP catalytic subunit family. The Rab3 GTPase-activating complex is a heterodimer composed of RAB3GAP1 and RAB3GAP2. The Rab3 GTPase-activating complex interacts with DMXL2. Interacts with LMAN1. Ubiquitous.

It localises to the cytoplasm. Its subcellular location is the endoplasmic reticulum. The protein resides in the golgi apparatus. The protein localises to the cis-Golgi network. Functionally, catalytic subunit of the Rab3 GTPase-activating (Rab3GAP) complex composed of RAB3GAP1 and RAB3GAP2, which has GTPase-activating protein (GAP) activity towards various Rab3 subfamily members (RAB3A, RAB3B, RAB3C and RAB3D), RAB5A and RAB43, and guanine nucleotide exchange factor (GEF) activity towards RAB18. As part of the Rab3GAP complex, acts as a GAP for Rab3 proteins by converting active RAB3-GTP to the inactive form RAB3-GDP. Rab3 proteins are involved in regulated exocytosis of neurotransmitters and hormones. The Rab3GAP complex, acts as a GEF for RAB18 by promoting the conversion of inactive RAB18-GDP to the active form RAB18-GTP. Recruits and stabilizes RAB18 at the cis-Golgi membrane in fibroblasts where RAB18 is most likely activated. Also involved in RAB18 recruitment at the endoplasmic reticulum (ER) membrane where it maintains proper ER structure. Required for normal eye and brain development. May participate in neurodevelopmental processes such as proliferation, migration and differentiation before synapse formation, and non-synaptic vesicular release of neurotransmitters. The protein is Rab3 GTPase-activating protein catalytic subunit of Homo sapiens (Human).